The chain runs to 292 residues: MAQHDQLHRYLFEQFAVRGELVTVSETWKQILENHNYPQPVKRVLGELLVATSLLTATLKFAGDITVQLQGDGPMNMAVINGNNQQQMRGVARVQGEVPEGADLKTLVGNGFLVITITPDEGERYQGVVGLEGDTLAECLEDYFLRSEQLPTRLFIRTGEVEGQLAAGGMLLQVLPAQNAQGNDFEHLATLTETIKTEELFTLPANEVLWRLYHEEEVTLYDPQDVEFKCTCSRERCAGALRTLPDEEIDSIMAEDGEIDMNCDYCGSHYVFNAMDIAEIRNNASPADPQVH.

2 cysteine pairs are disulfide-bonded: Cys230–Cys232 and Cys263–Cys266.

This sequence belongs to the HSP33 family. Post-translationally, under oxidizing conditions two disulfide bonds are formed involving the reactive cysteines. Under reducing conditions zinc is bound to the reactive cysteines and the protein is inactive.

The protein resides in the cytoplasm. Redox regulated molecular chaperone. Protects both thermally unfolding and oxidatively damaged proteins from irreversible aggregation. Plays an important role in the bacterial defense system toward oxidative stress. This is 33 kDa chaperonin from Enterobacter sp. (strain 638).